The chain runs to 224 residues: N-terminal Xaa-Pro-Lys N-methyltransferase 1-A (224 aa).

Residues Gly-70, Arg-75, 92 to 94, 120 to 121, and Gln-136 each bind S-adenosyl-L-methionine; these read DVT and LQ.

Belongs to the methyltransferase superfamily. NTM1 family.

It is found in the nucleus. The catalysed reaction is N-terminal L-alanyl-L-prolyl-L-lysyl-[protein] + 3 S-adenosyl-L-methionine = N-terminal N,N,N-trimethyl-L-alanyl-L-prolyl-L-lysyl-[protein] + 3 S-adenosyl-L-homocysteine + 3 H(+). The enzyme catalyses N-terminal L-seryl-L-prolyl-L-lysyl-[protein] + 3 S-adenosyl-L-methionine = N-terminal N,N,N-trimethyl-L-seryl-L-prolyl-L-lysyl-[protein] + 3 S-adenosyl-L-homocysteine + 3 H(+). It carries out the reaction N-terminal L-prolyl-L-prolyl-L-lysyl-[protein] + 2 S-adenosyl-L-methionine = N-terminal N,N-dimethyl-L-prolyl-L-prolyl-L-lysyl-[protein] + 2 S-adenosyl-L-homocysteine + 2 H(+). In terms of biological role, distributive alpha-N-methyltransferase that methylates the N-terminus of target proteins containing the N-terminal motif [Ala/Gly/Pro/Ser]-Pro-Lys when the initiator Met is cleaved. Specifically catalyzes mono-, di- or tri-methylation of the exposed alpha-amino group of the Ala, Gly or Ser residue in the [Ala/Gly/Ser]-Pro-Lys motif and mono- or di-methylation of Pro in the Pro-Pro-Lys motif. Required during mitosis for normal bipolar spindle formation and chromosome segregation via its action on target proteins. The protein is N-terminal Xaa-Pro-Lys N-methyltransferase 1-A (ntmt1-a) of Xenopus laevis (African clawed frog).